Reading from the N-terminus, the 401-residue chain is Probable plasmid-partitioning protein ParB (401 aa).

Residues 232 to 272 are disordered; it reads KTRGKENARDKAAAVKEEVKPSKKPKADNGEKTPKGRSHEE.

It belongs to the ParB family.

The polypeptide is Probable plasmid-partitioning protein ParB (Xylella fastidiosa (strain 9a5c)).